The chain runs to 251 residues: Ubiquinone/menaquinone biosynthesis C-methyltransferase UbiE (251 aa).

S-adenosyl-L-methionine is bound by residues Thr-74, Asp-95, 123-124 (NA), and Ser-140.

The protein belongs to the class I-like SAM-binding methyltransferase superfamily. MenG/UbiE family.

It catalyses the reaction a 2-demethylmenaquinol + S-adenosyl-L-methionine = a menaquinol + S-adenosyl-L-homocysteine + H(+). The catalysed reaction is a 2-methoxy-6-(all-trans-polyprenyl)benzene-1,4-diol + S-adenosyl-L-methionine = a 5-methoxy-2-methyl-3-(all-trans-polyprenyl)benzene-1,4-diol + S-adenosyl-L-homocysteine + H(+). It participates in quinol/quinone metabolism; menaquinone biosynthesis; menaquinol from 1,4-dihydroxy-2-naphthoate: step 2/2. The protein operates within cofactor biosynthesis; ubiquinone biosynthesis. Its function is as follows. Methyltransferase required for the conversion of demethylmenaquinol (DMKH2) to menaquinol (MKH2) and the conversion of 2-polyprenyl-6-methoxy-1,4-benzoquinol (DDMQH2) to 2-polyprenyl-3-methyl-6-methoxy-1,4-benzoquinol (DMQH2). The sequence is that of Ubiquinone/menaquinone biosynthesis C-methyltransferase UbiE from Pectobacterium atrosepticum (strain SCRI 1043 / ATCC BAA-672) (Erwinia carotovora subsp. atroseptica).